A 241-amino-acid polypeptide reads, in one-letter code: Serine protease 58 (241 aa).

The first 17 residues, Met-1–Ala-17, serve as a signal peptide directing secretion. In terms of domain architecture, Peptidase S1 spans Phe-18–Gln-239. A disulfide bridge connects residues Cys-41 and Cys-57. Active-site charge relay system residues include His-56 and Asp-101. 3 cysteine pairs are disulfide-bonded: Cys-133–Cys-201, Cys-165–Cys-180, and Cys-191–Cys-215. 2 N-linked (GlcNAc...) asparagine glycosylation sites follow: Asn-156 and Asn-173. The active-site Charge relay system is Ser-195.

It belongs to the peptidase S1 family.

Its subcellular location is the secreted. It carries out the reaction Preferential cleavage: Arg-|-Xaa, Lys-|-Xaa.. This is Serine protease 58 (PRSS58) from Homo sapiens (Human).